A 443-amino-acid polypeptide reads, in one-letter code: UDP-N-acetylmuramate--L-alanine ligase (443 aa).

110 to 116 is a binding site for ATP; sequence GAHGKTS.

It belongs to the MurCDEF family.

The protein localises to the cytoplasm. It carries out the reaction UDP-N-acetyl-alpha-D-muramate + L-alanine + ATP = UDP-N-acetyl-alpha-D-muramoyl-L-alanine + ADP + phosphate + H(+). Its pathway is cell wall biogenesis; peptidoglycan biosynthesis. Functionally, cell wall formation. This Streptococcus equi subsp. zooepidemicus (strain MGCS10565) protein is UDP-N-acetylmuramate--L-alanine ligase.